Here is a 152-residue protein sequence, read N- to C-terminus: Ninjurin-1 (152 aa).

Met1 carries the post-translational modification N-acetylmethionine. The interval 1–26 (MDSGTEEYELNGGLPPGTPGSPDASP) is disordered. Residues 1–78 (MDSGTEEYEL…EQGPSFAFYV (78 aa)) are Extracellular-facing. Phosphoserine occurs at positions 21 and 25. The interval 26–37 (PARWGWRHGPIN) is N-terminal adhesion motif. The required to induce plasma membrane rupture stretch occupies residues 40 to 69 (HYASKKSAAESMLDIALLMANASQLKAVVE). A helix alpha1 region spans residues 44–55 (KKSAAESMLDIA). The helix alpha2 stretch occupies residues 58–74 (MANASQLKAVVEQGPSF). N-linked (GlcNAc...) asparagine glycosylation is present at Asn60. A helical membrane pass occupies residues 79 to 103 (PLVVLISISLVLQIGVGVLLIFLVK). Residues 104-113 (YDLNNPAKHA) lie on the Cytoplasmic side of the membrane. Residues 114–138 (KLDFLNNLATGLVFIIVVVNIFITA) traverse the membrane as a helical segment. Topologically, residues 139–152 (FGVQKPLMDMAPQQ) are extracellular.

The protein belongs to the ninjurin family. As to quaternary structure, homodimer; in absence of death stimuli, forms an inactive homodimer. Homooligomer; in response to death stimuli, homooligomerizes into long, highly branched filaments and large, ring-shaped structures in the membrane. In terms of processing, cleaved by MMP9 protease to generate the Secreted ninjurin-1 form. N-linked glycosylation is required for homooligomerization. In terms of tissue distribution, widely expressed in both adult and embryonic tissues, primarily those of epithelial origin.

The protein resides in the cell membrane. It localises to the synaptic cell membrane. It is found in the secreted. Its activity is regulated as follows. In response to death stimuli, homooligomerizes and disrupts membrane integrity by introducing the hydrophilic faces of alpha1 and alpha2 helices into the hydrophobic membrane. Homooligomerization and ability to mediate plasma membrane rupture is inhibited by glycine; it is unclear whether glycine directly or indirectly inhibits homooligomerization. In normal conditions, NINJ1 is autoinhibited via formation of a homodimer: in the inactive homodimer, the alpha1 and alpha2 helices (residues 44-74) form a single transmembrane region without a kink, in which hydrophilic faces of alpha1 and alpha2 helices are sequestered. Effector of various programmed cell death, such as pyroptosis and necroptosis, which mediates plasma membrane rupture (cytolysis). Oligomerizes in response to death stimuli and forms ring-like structures on the plasma membrane: acts by cutting and shedding membrane disks, like a cookie cutter, leading to membrane damage and loss that cannot be repaired by the cell. Plasma membrane rupture leads to release intracellular molecules named damage-associated molecular patterns (DAMPs) that propagate the inflammatory response. Mechanistically, mediates plasma membrane rupture by introducing hydrophilic faces of 2 alpha helices into the hydrophobic membrane. Induces plasma membrane rupture downstream of Gasdermin (GSDMA, GSDMB, GSDMC, GSDMD, or GSDME) or MLKL during pyroptosis or necroptosis, respectively. Acts as an effector of PANoptosis downstream of CASP1, CASP4, CASP8 and RIPK3. Also induces plasma membrane rupture in response to cell swelling caused by osmotic stress and ferroptosis downstream of lipid peroxidation. Acts as a regulator of Toll-like receptor 4 (TLR4) signaling triggered by lipopolysaccharide (LPS) during systemic inflammation; directly binds LPS. Involved in leukocyte migration during inflammation by promoting transendothelial migration of macrophages via homotypic binding. Promotes the migration of monocytes across the brain endothelium to central nervous system inflammatory lesions. Also acts as a homophilic transmembrane adhesion molecule involved in various processes such as axonal growth, cell chemotaxis and angiogenesis. Promotes cell adhesion by mediating homophilic interactions via its extracellular N-terminal adhesion motif (N-NAM). Involved in the progression of the inflammatory stress by promoting cell-to-cell interactions between immune cells and endothelial cells. Plays a role in nerve regeneration by promoting maturation of Schwann cells. Acts as a regulator of angiogenesis. Promotes the formation of new vessels by mediating the interaction between capillary pericyte cells and endothelial cells. Promotes osteoclasts development by enhancing the survival of prefusion osteoclasts. Also involved in striated muscle growth and differentiation. Functionally, secreted form generated by cleavage, which has chemotactic activity. Acts as an anti-inflammatory mediator by promoting monocyte recruitment, thereby ameliorating atherosclerosis. The protein is Ninjurin-1 of Homo sapiens (Human).